The sequence spans 164 residues: Ribosome maturation factor RimM (164 aa).

The region spanning 90-161 (KGSYFIADLI…TVTIKPLEIW (72 aa)) is the PRC barrel domain.

It belongs to the RimM family. As to quaternary structure, binds ribosomal protein uS19.

It localises to the cytoplasm. In terms of biological role, an accessory protein needed during the final step in the assembly of 30S ribosomal subunit, possibly for assembly of the head region. Essential for efficient processing of 16S rRNA. May be needed both before and after RbfA during the maturation of 16S rRNA. It has affinity for free ribosomal 30S subunits but not for 70S ribosomes. In Clostridium botulinum (strain ATCC 19397 / Type A), this protein is Ribosome maturation factor RimM.